A 277-amino-acid chain; its full sequence is Putative hydro-lyase BP1875 (277 aa).

Belongs to the D-glutamate cyclase family.

The chain is Putative hydro-lyase BP1875 from Bordetella pertussis (strain Tohama I / ATCC BAA-589 / NCTC 13251).